Reading from the N-terminus, the 161-residue chain is Nucleotide-binding protein amb3630 (161 aa).

It belongs to the YajQ family.

Functionally, nucleotide-binding protein. In Paramagnetospirillum magneticum (strain ATCC 700264 / AMB-1) (Magnetospirillum magneticum), this protein is Nucleotide-binding protein amb3630.